We begin with the raw amino-acid sequence, 1025 residues long: Myosin phosphatase Rho-interacting protein (1025 aa).

Residues 2–383 are interaction with F-actin; sequence SAAKENPCRK…DRRSTEPSVT (382 aa). One can recognise a PH 1 domain in the interval 43-150; sequence KPIYGGWLLL…WLEMLMVYPR (108 aa). Disordered regions lie at residues 152–302 and 317–383; these read NKQN…RRSQ and HMET…PSVT. Low complexity predominate over residues 179-189; sequence SSSSSSSSSSS. S192, S217, S218, S220, S224, and S226 each carry phosphoserine. Over residues 217–236 the composition is skewed to low complexity; it reads SSLSPAQSPSQSQPPAASSL. Over residues 239-263 the composition is skewed to basic and acidic residues; it reads PGLESKEEESAMSSDRMDCGRKVRV. 2 positions are modified to phosphoserine: S265 and S269. Positions 271–281 are enriched in basic and acidic residues; that stretch reads EKTKQDLKAEE. Residues 284–294 show a composition bias toward pro residues; it reads LPPPLSPPSPS. Phosphoserine is present on residues S289 and S292. T295 carries the phosphothreonine modification. S326 is subject to Phosphoserine. The span at 332–348 shows a compositional bias: basic and acidic residues; sequence RQGRSEKRAFPRKRDFT. T348 bears the Phosphothreonine mark. Phosphoserine is present on residues S362 and S365. The PH 2 domain maps to 387–483; the sequence is LNFKKGWLTK…WIQTIMKHVH (97 aa). 2 disordered regions span residues 485-545 and 560-591; these read TTAP…TFDW and VGGVGPADTHEPLRPEAEPGELERERARRREE. S493 is modified (phosphoserine). 2 stretches are compositionally biased toward basic and acidic residues: residues 524 to 545 and 567 to 589; these read PEQKRSRARERRREGRSKTFDW and DTHEPLRPEAEPGELERERARRR. An interaction with RHOA region spans residues 546-824; the sequence is AEFRPIQQAL…SVQRELEVLS (279 aa). At S619 the chain carries Phosphoserine. The residue at position 646 (T646) is a Phosphothreonine. S663 and S800 each carry phosphoserine. Positions 673–977 form a coiled coil; that stretch reads HELTSLLEKE…AATEALGEKS (305 aa). Residues 824-879 form an interaction with PPP1R12A region; it reads SEQYSQKCLENAHLAQALEAERQALRQCQRENQELNAHNQELNNRLAAEITRLRTL. Residues S891, S977, S993, S1014, and S1016 each carry the phosphoserine modification.

As to quaternary structure, binds F-actin through its N-terminus. Interacts with MYZAP. Binds RHOA, PPP1R12A/MBS and PPP1R12C/MBS85 through adjacent coiled coil domains.

It is found in the cytoplasm. The protein localises to the cytoskeleton. Its function is as follows. Targets myosin phosphatase to the actin cytoskeleton. Required for the regulation of the actin cytoskeleton by RhoA and ROCK1. Depletion leads to an increased number of stress fibers in smooth muscle cells through stabilization of actin fibers by phosphorylated myosin. Overexpression of MRIP as well as its F-actin-binding region leads to disassembly of stress fibers in neuronal cells. The sequence is that of Myosin phosphatase Rho-interacting protein (MPRIP) from Homo sapiens (Human).